The sequence spans 231 residues: Heptaprenylglyceryl phosphate synthase (231 aa).

Lysine 12 serves as a coordination point for sn-glycerol 1-phosphate. Aspartate 14 and threonine 40 together coordinate Mg(2+). Residues 159-164 (YMEYSG), glycine 189, and 209-210 (GN) each bind sn-glycerol 1-phosphate.

The protein belongs to the GGGP/HepGP synthase family. Group I subfamily. As to quaternary structure, homodimer. Mg(2+) serves as cofactor.

The catalysed reaction is sn-glycerol 1-phosphate + all-trans-heptaprenyl diphosphate = 3-heptaprenyl-sn-glycero-1-phosphate + diphosphate. Its pathway is membrane lipid metabolism; glycerophospholipid metabolism. Its function is as follows. Prenyltransferase that catalyzes in vivo the transfer of the heptaprenyl moiety of heptaprenyl pyrophosphate (HepPP; 35 carbon atoms) to the C3 hydroxyl of sn-glycerol-1-phosphate (G1P), producing heptaprenylglyceryl phosphate (HepGP). This reaction is an ether-bond-formation step in the biosynthesis of archaea-type G1P-based membrane lipids found in Bacillales. The sequence is that of Heptaprenylglyceryl phosphate synthase from Brevibacillus brevis (strain 47 / JCM 6285 / NBRC 100599).